Reading from the N-terminus, the 114-residue chain is Non-specific lipid-transfer protein 1 (114 aa).

Residues 1–25 form the signal peptide; it reads MIKGLAITVVAVLAVVQLLARPSDA. 4 cysteine pairs are disulfide-bonded: cysteine 29/cysteine 76, cysteine 39/cysteine 53, cysteine 54/cysteine 99, and cysteine 74/cysteine 113.

It belongs to the plant LTP family. In terms of tissue distribution, expressed in seeds and, at very low levels, in pulp of fruit (at protein level).

In terms of biological role, plant non-specific lipid-transfer proteins transfer phospholipids as well as galactolipids across membranes. May play a role in wax or cutin deposition in the cell walls of expanding epidermal cells and certain secretory tissues. The chain is Non-specific lipid-transfer protein 1 from Actinidia chinensis var. chinensis (Chinese soft-hair kiwi).